We begin with the raw amino-acid sequence, 504 residues long: Procardosin-A (504 aa).

A signal peptide spans 1–24 (MGTSIKANVLALFLFYLLSPTVFS). Positions 25–68 (VSDDGLIRIGLKKRKVDRIDQLRGRRALMEGNARKDFGFRGTVR) are excised as a propeptide. In terms of domain architecture, Peptidase A1 spans 85 to 501 (YFGEIGIGTP…DYGNLLVGFA (417 aa)). Residue D103 is part of the active site. The cysteines at positions 116 and 122 are disulfide-linked. An N-linked (GlcNAc...) asparagine glycan is attached at N139. The RGD motif signature appears at 246-248 (RGD). A disulfide bridge links C277 with C281. Residue D286 is part of the active site. The propeptide at 310-414 (GVMNQQCKTV…YANELCEHLS (105 aa)) is plant-specific insert. The region spanning 311-416 (VMNQQCKTVV…NELCEHLSTS (106 aa)) is the Saposin B-type domain. Disulfide bonds link C316–C410, C341–C382, C347–C379, and C424–C461. A glycan (N-linked (GlcNAc...) asparagine) is linked at N432. Residues 455-457 (KGE) carry the KGE motif motif.

The protein belongs to the peptidase A1 family. Heterodimer of a light chain and a heavy chain. An intermediate form (35 kDa and 30 kDa subunits) is produced first, and undergoes proteolytic processing to remove the internal plant-specific insert (PSI) and the propeptide. There is some heterogeniety at the cleavage site. Interacts (via RGD or KGE motifs) with PLD1 (via C2 domain). In terms of processing, N-glycosylated. Glycans found at Asn-139 include approximately 6% oligomannose, 82% oligosaccharides of the plant modified type with proximal fucose but without xylose and 6% oligosaccharides of the plant modified type with proximal fucose and xylose. Glycans found at Asn-432 include 14% oligosaccharides of the plant modified type with proximal fucose but without xylose and 86% oligosaccharides of the plant modified type with proximal fucose and xylose. As to expression, detected only in pistils, not in seeds, roots, midribs, bracts, stamens, pollen, vascular or supporting tissues. Detected in seeds. High amounts are detected in the broad outer region of the upper portion of the stigma, towards the lower portion of the stigma it accumulates at the periphery. Within the stigma, expressed mainly in the epidermic papillae, lower levels are found in the cortical parenchyma. Present mainly in epidermal cells within the stye (at protein level). Expressed in young flower buds, and at lower levels in seeds, pollen and bracteas, but not in roots or leaves.

It localises to the microsome membrane. The protein resides in the protein storage vacuole. The protein localises to the secreted. It is found in the cell wall. Its subcellular location is the extracellular space. It localises to the extracellular matrix. With respect to regulation, inhibited by the specific aspartic proteinase inhibitors diazoacetyl-noleucine methyl ester and pepstatin. In terms of biological role, aspartic proteinase with a high preference for bonds between hydrophobic residues. Cleaves alpha-lactalbumin but not beta-lactoglobulin. The sequence is that of Procardosin-A from Cynara cardunculus (Cardoon).